We begin with the raw amino-acid sequence, 843 residues long: Vacuolar membrane protease (843 aa).

Residues 1 to 16 (MTNSRRHIFERICAKA) lie on the Cytoplasmic side of the membrane. The helical transmembrane segment at 17–37 (FQSSLTCSIFGFTVLLILYLL) threads the bilayer. Residues 38 to 347 (DWKRIAQVPG…LAFGKYWQLN (310 aa)) are Vacuolar-facing. Residues N96, N109, and N117 are each glycosylated (N-linked (GlcNAc...) asparagine). Zn(2+)-binding residues include H147 and D159. E191 functions as the Proton acceptor in the catalytic mechanism. E192 lines the Zn(2+) pocket. The N-linked (GlcNAc...) asparagine glycan is linked to N209. E217 serves as a coordination point for Zn(2+). N-linked (GlcNAc...) asparagine glycosylation is present at N275. H292 is a Zn(2+) binding site. N322 carries an N-linked (GlcNAc...) asparagine glycan. A helical membrane pass occupies residues 348-368 (LPIYQVLNIIFAVICPIVLLL). At 369-386 (TLIRFPSLYEQLKKPRYT) the chain is on the cytoplasmic side. The chain crosses the membrane as a helical span at residues 387 to 407 (VCFVVSCIFVSIFDTLTVLLL). Over 408-417 (TWINPYVINS) the chain is Vacuolar. Residues 418–438 (HTGLILALFYLTNLIALAFSF) traverse the membrane as a helical segment. The Cytoplasmic portion of the chain corresponds to 439 to 456 (RAAATHSKLSSEDLSSIE). The helical transmembrane segment at 457–477 (IVFIWYAQILWYLVFIVSVIL) threads the bilayer. Residues 478-484 (SIYFQLG) are Vacuolar-facing. The chain crosses the membrane as a helical span at residues 485–505 (STYWVTLSYLCTFTCCIMTII). Topologically, residues 506-566 (RINYFVDNVV…NRAHVKLIDN (61 aa)) are cytoplasmic. A helical membrane pass occupies residues 567-587 (IWTVIYFIFNVPFPVFLCYDI). Topologically, residues 588 to 608 (LVETILPAGSQTLTDSVFSSK) are vacuolar. The chain crosses the membrane as a helical span at residues 609–629 (LYKLVIFVVFLSLVNSGPFIF). At 630–636 (RALSKKS) the chain is on the cytoplasmic side. Residues 637–657 (LAVLTMLWITLFVQALSVNPF) form a helical membrane-spanning segment. At 658–843 (TESAPLKLSF…LLKVKSSIVI (186 aa)) the chain is on the vacuolar side. N-linked (GlcNAc...) asparagine glycans are attached at residues N677, N703, N707, N754, and N788.

The protein belongs to the peptidase M28 family. Zn(2+) is required as a cofactor.

It localises to the membrane. Its subcellular location is the vacuole membrane. Its function is as follows. May be involved in vacuolar sorting and osmoregulation. This Schizosaccharomyces pombe (strain 972 / ATCC 24843) (Fission yeast) protein is Vacuolar membrane protease.